The chain runs to 1331 residues: Contactin-associated protein-like 2 (1331 aa).

Positions M1–T27 are cleaved as a signal peptide. The Extracellular portion of the chain corresponds to A28–A1262. The region spanning C35–C181 is the F5/8 type C domain. An intrachain disulfide couples C35 to C181. The region spanning F216–C368 is the Laminin G-like 1 domain. Residues N289, N346, N363, N379, N436, N506, N507, and N546 are each glycosylated (N-linked (GlcNAc...) asparagine). C336 and C368 form a disulfide bridge. The region spanning F401–C552 is the Laminin G-like 2 domain. Cystine bridges form between C520–C552, C558–C569, C563–C578, and C580–C590. The region spanning I554 to H591 is the EGF-like 1 domain. In terms of domain architecture, Fibrinogen C-terminal spans N592–W798. 2 N-linked (GlcNAc...) asparagine glycosylation sites follow: N630 and N735. Positions N799–C963 constitute a Laminin G-like 3 domain. Disulfide bonds link C936/C963, C967/C980, C974/C989, and C991/C1001. In terms of domain architecture, EGF-like 2 spans C963 to N1002. The interval A1026 to D1045 is disordered. The Laminin G-like 4 domain occupies F1055–C1214. N-linked (GlcNAc...) asparagine glycosylation is found at N1116 and N1198. Cysteines 1178 and 1214 form a disulfide. A helical membrane pass occupies residues I1263–I1283. The Cytoplasmic segment spans residues R1284–I1331. Phosphoserine occurs at positions 1303 and 1306.

It belongs to the neurexin family. As to quaternary structure, interacts (via C-terminus) with KCNA2. Interacts with GPR37. In terms of tissue distribution, predominantly expressed in nervous system.

Its subcellular location is the membrane. The protein resides in the cell projection. The protein localises to the axon. It is found in the cell junction. It localises to the paranodal septate junction. Functionally, required for gap junction formation. Required, with CNTNAP1, for radial and longitudinal organization of myelinated axons. Plays a role in the formation of functional distinct domains critical for saltatory conduction of nerve impulses in myelinated nerve fibers. Demarcates the juxtaparanodal region of the axo-glial junction. In Homo sapiens (Human), this protein is Contactin-associated protein-like 2 (CNTNAP2).